The following is a 109-amino-acid chain: Elongin-C (109 aa).

The protein belongs to the SKP1 family.

Its subcellular location is the nucleus. SIII, also known as elongin, is a general transcription elongation factor that increases the RNA polymerase II transcription elongation past template-encoded arresting sites. Subunit A is transcriptionally active and its transcription activity is strongly enhanced by binding to the dimeric complex of the SIII regulatory subunits B and C (elongin BC complex). In terms of biological role, the elongin BC complex seems to be involved as an adapter protein in the proteasomal degradation of target proteins via different E3 ubiquitin ligase complexes. The chain is Elongin-C (tceb1) from Dictyostelium discoideum (Social amoeba).